Here is a 355-residue protein sequence, read N- to C-terminus: Serpentine receptor class epsilon-1 (355 aa).

7 helical membrane-spanning segments follow: residues 28–48, 56–76, 102–122, 144–164, 172–192, 232–252, and 268–288; these read FELL…YATI, LNFI…GRFI, ILSS…SLAV, ISLF…IVML, VMAF…LVLF, VVLF…MYMS, and FAFN…IIFS.

This sequence belongs to the nematode receptor-like protein sre family.

The protein resides in the membrane. The polypeptide is Serpentine receptor class epsilon-1 (sre-1) (Caenorhabditis elegans).